The following is a 46-amino-acid chain: Iota-conotoxin RXIA (46 aa).

Residues Pro-2 and Pro-11 each carry the 4-hydroxyproline; partial modification. Intrachain disulfides connect Cys-5–Cys-19, Cys-12–Cys-22, Cys-18–Cys-27, and Cys-21–Cys-38. Position 29 is a 4-hydroxyproline (Pro-29). Phe-44 carries the D-phenylalanine modification.

This sequence belongs to the conotoxin I1 superfamily. In terms of processing, the natural D-Phe-44 form of the peptide is more potent than the L-Phe-44 form. In terms of tissue distribution, expressed by the venom duct.

The protein resides in the secreted. Functionally, iota-conotoxins bind to voltage-gated sodium channels and act as agonists by shifting the voltage-dependence of activation to more hyperpolarized levels. This toxin acts on Nav1.6/SCN8A &gt; Nav1.2/SCN2A &gt; Nav1.7/SCN9A sodium channels. Produces general excitatory symptoms upon intracorporeal injection and repetitive action potentials in the frog cutaneous pectoris muscle. Natural peptide (with D-Phe) is active on nerve, but not on muscle. Synthetic peptide (with L-Phe) is not active on both nerve and muscle. This is Iota-conotoxin RXIA from Conus radiatus (Rayed cone).